The sequence spans 207 residues: Urease accessory protein UreG (207 aa).

Gly-14–Thr-21 contributes to the GTP binding site.

The protein belongs to the SIMIBI class G3E GTPase family. UreG subfamily. As to quaternary structure, homodimer. UreD, UreF and UreG form a complex that acts as a GTP-hydrolysis-dependent molecular chaperone, activating the urease apoprotein by helping to assemble the nickel containing metallocenter of UreC. The UreE protein probably delivers the nickel.

The protein resides in the cytoplasm. Facilitates the functional incorporation of the urease nickel metallocenter. This process requires GTP hydrolysis, probably effectuated by UreG. The protein is Urease accessory protein UreG of Tolumonas auensis (strain DSM 9187 / NBRC 110442 / TA 4).